Here is an 84-residue protein sequence, read N- to C-terminus: Metallothionein type 2b (84 aa).

This sequence belongs to the metallothionein superfamily. Type 15 family. As to expression, expressed in leaves, stems and roots.

It localises to the cytoplasm. It is found in the nucleus. Metallothioneins have a high content of cysteine residues that bind various heavy metals. Probably involved in maintaining homeostasis of essential transition metals and detoxification of toxic metals. Increases cadmium and zinc tolerance when expressed in heterologous systems. Metal chelator binding 6 cadmium or 5 zinc atoms per protein. In Colocasia esculenta (Wild taro), this protein is Metallothionein type 2b.